Consider the following 87-residue polypeptide: U1-theraphotoxin-Ct1a (87 aa).

An N-terminal signal peptide occupies residues 1-23 (MKTFTLIAILTCAVLVIFHAAAA). A propeptide spanning residues 24 to 48 (EELEVQDVIQPEDTLTGLATLDEDR) is cleaved from the precursor.

Belongs to the neurotoxin 12 (Hwtx-2) family. 03 (juruin) subfamily. Post-translationally, contains 3 disulfide bonds. Two different connectivities are observed in similar proteins (C1-C3, C2-C5, C4-C6 or C1-C4, C2-C5, C3-C6). In terms of tissue distribution, expressed by the venom gland.

The protein resides in the secreted. Its function is as follows. This toxin causes paralysis and death to sheep blowflies. It may inhibit voltage-gated calcium channels. This is U1-theraphotoxin-Ct1a from Coremiocnemis tropix (Australian tarantula spider).